Here is a 139-residue protein sequence, read N- to C-terminus: Putative truncated protein trichome birefringence-like 46 (139 aa).

The protein belongs to the PC-esterase family. TBL subfamily.

The sequence is that of Putative truncated protein trichome birefringence-like 46 (TBL46) from Arabidopsis thaliana (Mouse-ear cress).